The sequence spans 1699 residues: MDKLKINNNLSPPSSPSSSTTTPNLSSTNLENNLNSNINNNINNFNLNNSTNTFNNSNNIIINNNNNNNNNNNNNNNNNNNNSNNNNNNINNNNPNVNSPNEVILNNNFLKQNKKGFFKRNKKMIEIFLPPKFKSPIYRRCCILLGECGVYVFIYMFFLIFLRSFYPIFICGIVSMIVLYIVSTKTTKYKLVALIYIFVQSILNFTFFLQITNNFNNNTVNINNTDDYSNEVIEFSKLNFLFIMNLILSLISIQIFFPKFTFSITLTCSLNIFNIIIHLISIYSLNTKKLIVFQNLIVPITVSFLLSFYSYILSIDNQEIEAKEKRFRNIFDTSSEALVIHKNGLIIDVNSTFEKIFQIKQSDLINGTIWEYLPELESFFQNTNGNSKYTNQSLQQQLQQQQQQQQQLYNTITNGGNNKQTSTTSANSTPRYNNYNNNNINSNNLNNLNVFNNLNNLNNLNNNNNNHHIHKVSRSNTGLSDSSSIFDDSDSVDFFSMKNINKCPIVLDTVGITPCGSEFCAQVKIERKKDMLIGSGTSSFNLLNNNNNNNNNNNNNNNNNNNNNNNNNNSNNNNNNNSNNNNNNNNINNNISNNIINNNNNNNNSGIITNLSQQSNNLSTTNLNTSSKIINHKHKNSKQDFDVMSIVDISAKKKLMIADQALRRAEELNQAKINFLTTVSHEVRTPINGILASVEILDGSQLDVTQRDFLSCIKQSADYLLDLITDILDFSKIEAGKFELDRVEFNLITMLEESINIVYRTAQERGIEVLTFIDPDVPIILIGDPYRVKQCVLNFLSNAIKFTHKGQVMVKVSIVDQINNNNNNNNNNNNNNNNNNNNNNNNNNNNNNKIVGFSNNNNNNNNNNNNGNNGILNFKLSFSVEDSGVGIKEEVLDCLFTPFHQLGGSPRKYLGTGLGLSISKKLTTLMGGEIGVKSVYGVGSAFSFTSILSTTSTTPISLQSLGSSLSIALNNLSPTIPKISGFIYDDNIHTSNSLFNFLKLMNINLKIINPIINNNNNNNNNNNNNNNNNNNNNNNNNNNNNDNNNNNNNNNDNNIDQQQLKFEFENEIDKYCNVEDDNNNVILIITNQLSNDNLNYFKDKINQLNNSIYWFVLCDNGLKAIDPFYYGIVKKPNNLLNLVDTVFKVYNCQLPQDLYQLLTNGSKDDYKNYLKYRNVVIKKITEDNEKKQQQQQQQQQQMGDTLSSTKSPQYTNLPPLDISSSSNGSLNKSNRSNLLRKSSSVYSDHVAITRGMVQVNRSPRPSTPPPLFNLKGNNSNPNSTELNSTNSVNGNPNNDSTLETIEPLNISETVGDLCSSGSVINNSNFIINNNFLTSSPYGSCLTPNSGTTSPSIPININNNDNNNNNNNNNNNNNNNNNNNNNNNNNNNNNNNNSFKKLEPDNFSPPPSILINDNNIIPALNVTTPITISTSTSSSSSLLINNEINNKSTTSKRPSFIPPLDIQSKKLIINTADENHKNNCIIDFEQIFGQDGKQQPQQQQQQQQQQQQQQQQQQQQQQQQQQQQQQQQQQQQQQQKLNIGNQQQQQILSSPRLQSQLLSNCDSLGNTPPVTPHRRNALIVDDTELNRKVLAQLLRRMDWSVSFAENGIEALKEITSERCFDIIFMDCQMPILDGFETTKLLRLRELENNWKPLNIVALSADSSSSFGQVCFDCGMNGYLGKPITLITLKDTLLKWGGYRD.

2 disordered regions span residues 1 to 32 and 58 to 97; these read MDKL…NLEN and NNII…NPNV. Positions 7–32 are enriched in low complexity; sequence NNNLSPPSSPSSSTTTPNLSSTNLEN. The next 6 helical transmembrane spans lie at 142 to 162, 164 to 184, 191 to 211, 238 to 258, 262 to 282, and 295 to 315; these read CILL…LIFL, SFYP…IVST, LVAL…FLQI, LNFL…IFFP, FSIT…LISI, and NLIV…ILSI. Polar residues predominate over residues 412–432; the sequence is ITNGGNNKQTSTTSANSTPRY. Disordered regions lie at residues 412-439 and 542-593; these read ITNG…NNNN and LLNN…NISN. A compositionally biased stretch (low complexity) spans 544–593; it reads NNNNNNNNNNNNNNNNNNNNNNNNNNSNNNNNNNSNNNNNNNNINNNISN. Residues 678–950 form the Histidine kinase domain; the sequence is TVSHEVRTPI…AFSFTSILST (273 aa). At histidine 681 the chain carries Phosphohistidine; by autocatalysis. 5 disordered regions span residues 819–866, 1018–1054, 1186–1239, 1252–1294, and 1351–1406; these read NNNN…NNNN, NNNN…NDNN, KKQQ…RKSS, MVQV…NPNN, and SIPI…SPPP. Positions 1198–1212 are enriched in polar residues; that stretch reads MGDTLSSTKSPQYTN. Over residues 1219 to 1239 the composition is skewed to low complexity; it reads SSSSNGSLNKSNRSNLLRKSS. Residues 1271 to 1282 are compositionally biased toward polar residues; the sequence is KGNNSNPNSTEL. 2 stretches are compositionally biased toward low complexity: residues 1283–1294 and 1355–1392; these read NSTNSVNGNPNN and NINN…NNNN. Residues 1575 to 1695 enclose the Response regulatory domain; the sequence is NALIVDDTEL…TLKDTLLKWG (121 aa). 4-aspartylphosphate is present on aspartate 1625.

The protein resides in the membrane. The catalysed reaction is ATP + protein L-histidine = ADP + protein N-phospho-L-histidine.. Functionally, may act in a signal transduction pathway. This protein undergoes an ATP-dependent autophosphorylation at a conserved histidine residue in the kinase core, and a phosphoryl group is then transferred to a conserved aspartate residue in the receiver domain. The sequence is that of Hybrid signal transduction histidine kinase E (dhkE) from Dictyostelium discoideum (Social amoeba).